Reading from the N-terminus, the 375-residue chain is Probable neutral protease 2 homolog ARB_05817 (375 aa).

Residues 1–19 form the signal peptide; it reads MQVIVALAALGSLAAPALG. Positions 20-189 are excised as a propeptide; it reads FSIPRGVPVS…RGPLTRINKR (170 aa). Cystine bridges form between Cys197/Cys267 and Cys274/Cys292. Residue His317 coordinates Zn(2+). Residue Glu318 is part of the active site. 2 residues coordinate Zn(2+): His321 and Asp332.

Belongs to the peptidase M35 family. Zn(2+) serves as cofactor.

It localises to the secreted. The catalysed reaction is Preferential cleavage of bonds with hydrophobic residues in P1'. Also 3-Asn-|-Gln-4 and 8-Gly-|-Ser-9 bonds in insulin B chain.. Probable secreted metalloprotease that shows high activities on basic nuclear substrates such as histone and protamine. May be involved in virulence. This Arthroderma benhamiae (strain ATCC MYA-4681 / CBS 112371) (Trichophyton mentagrophytes) protein is Probable neutral protease 2 homolog ARB_05817.